The primary structure comprises 267 residues: Tryptophan synthase alpha chain (267 aa).

Active-site proton acceptor residues include Glu44 and Asp55.

It belongs to the TrpA family. As to quaternary structure, tetramer of two alpha and two beta chains.

It catalyses the reaction (1S,2R)-1-C-(indol-3-yl)glycerol 3-phosphate + L-serine = D-glyceraldehyde 3-phosphate + L-tryptophan + H2O. The protein operates within amino-acid biosynthesis; L-tryptophan biosynthesis; L-tryptophan from chorismate: step 5/5. The alpha subunit is responsible for the aldol cleavage of indoleglycerol phosphate to indole and glyceraldehyde 3-phosphate. This Coxiella burnetii (strain Dugway 5J108-111) protein is Tryptophan synthase alpha chain.